We begin with the raw amino-acid sequence, 100 residues long: Large ribosomal subunit protein bL21 (100 aa).

It belongs to the bacterial ribosomal protein bL21 family. Part of the 50S ribosomal subunit. Contacts protein L20.

This protein binds to 23S rRNA in the presence of protein L20. This Wolbachia pipientis wMel protein is Large ribosomal subunit protein bL21.